The following is a 429-amino-acid chain: UDP-N-acetylglucosamine 1-carboxyvinyltransferase (429 aa).

22–23 (KN) serves as a coordination point for phosphoenolpyruvate. Arg-102 contributes to the UDP-N-acetyl-alpha-D-glucosamine binding site. Residue Cys-126 is the Proton donor of the active site. Cys-126 bears the 2-(S-cysteinyl)pyruvic acid O-phosphothioketal mark. UDP-N-acetyl-alpha-D-glucosamine contacts are provided by residues 131-135 (RPVDL), Asp-316, and Ile-338.

It belongs to the EPSP synthase family. MurA subfamily.

It is found in the cytoplasm. It catalyses the reaction phosphoenolpyruvate + UDP-N-acetyl-alpha-D-glucosamine = UDP-N-acetyl-3-O-(1-carboxyvinyl)-alpha-D-glucosamine + phosphate. Its pathway is cell wall biogenesis; peptidoglycan biosynthesis. In terms of biological role, cell wall formation. Adds enolpyruvyl to UDP-N-acetylglucosamine. This Rhodopseudomonas palustris (strain BisB18) protein is UDP-N-acetylglucosamine 1-carboxyvinyltransferase.